Here is an 86-residue protein sequence, read N- to C-terminus: Protein Tat (86 aa).

The segment at 1 to 24 (MEPVDPRLEPWKHPGSQPKTACTN) is interaction with human CREBBP. The transactivation stretch occupies residues 1–48 (MEPVDPRLEPWKHPGSQPKTACTNCYCKKCCFHCQVCFITKALGISYG). Cysteine 22, cysteine 25, and cysteine 27 together coordinate Zn(2+). A cysteine-rich region spans residues 22 to 37 (CTNCYCKKCCFHCQVC). Lysine 28 is modified (N6-acetyllysine; by host PCAF). Residues cysteine 30, histidine 33, cysteine 34, and cysteine 37 each contribute to the Zn(2+) site. The core stretch occupies residues 38–48 (FITKALGISYG). Residues 48 to 59 (GRKKRRQRRRAH) show a composition bias toward basic residues. The segment at 48–86 (GRKKRRQRRRAHQNSQTHQASLSKQPTSQPRGDPTGPKE) is disordered. Residues 49–57 (RKKRRQRRR) carry the Nuclear localization signal, RNA-binding (TAR), and protein transduction motif. An interaction with the host capping enzyme RNGTT region spans residues 49-86 (RKKRRQRRRAHQNSQTHQASLSKQPTSQPRGDPTGPKE). 2 positions are modified to N6-acetyllysine; by host EP300 and GCN5L2: lysine 50 and lysine 51. An asymmetric dimethylarginine; by host PRMT6 mark is found at arginine 52 and arginine 53. Polar residues predominate over residues 60 to 77 (QNSQTHQASLSKQPTSQP). Lysine 71 is covalently cross-linked (Glycyl lysine isopeptide (Lys-Gly) (interchain with G-Cter in ubiquitin)). The Cell attachment site signature appears at 78-80 (RGD).

It belongs to the lentiviruses Tat family. As to quaternary structure, interacts with host CCNT1. Associates with the P-TEFb complex composed at least of Tat, P-TEFb (CDK9 and CCNT1), TAR RNA, RNA Pol II. Recruits the HATs CREBBP, TAF1/TFIID, EP300, PCAF and GCN5L2. Interacts with host KAT5/Tip60; this interaction targets the latter to degradation. Interacts with the host deacetylase SIRT1. Interacts with host capping enzyme RNGTT; this interaction stimulates RNGTT. Binds to host KDR, and to the host integrins ITGAV/ITGB3 and ITGA5/ITGB1. Interacts with host KPNB1/importin beta-1 without previous binding to KPNA1/importin alpha-1. Interacts with EIF2AK2. Interacts with host nucleosome assembly protein NAP1L1; this interaction may be required for the transport of Tat within the nucleus, since the two proteins interact at the nuclear rim. Interacts with host C1QBP/SF2P32; this interaction involves lysine-acetylated Tat. Interacts with the host chemokine receptors CCR2, CCR3 and CXCR4. Interacts with host DPP4/CD26; this interaction may trigger an anti-proliferative effect. Interacts with host LDLR. Interacts with the host extracellular matrix metalloproteinase MMP1. Interacts with host PRMT6; this interaction mediates Tat's methylation. Interacts with, and is ubiquitinated by MDM2/Hdm2. Interacts with host PSMC3 and HTATIP2. Interacts with STAB1; this interaction may overcome SATB1-mediated repression of IL2 and IL2RA (interleukin) in T cells by binding to the same domain than HDAC1. Interacts (when acetylated) with human CDK13, thereby increasing HIV-1 mRNA splicing and promoting the production of the doubly spliced HIV-1 protein Nef. Interacts with host TBP; this interaction modulates the activity of transcriptional pre-initiation complex. Interacts with host RELA. Interacts with host PLSCR1; this interaction negatively regulates Tat transactivation activity by altering its subcellular distribution. In terms of processing, asymmetrical arginine methylation by host PRMT6 seems to diminish the transactivation capacity of Tat and affects the interaction with host CCNT1. Post-translationally, acetylation by EP300, CREBBP, GCN5L2/GCN5 and PCAF regulates the transactivation activity of Tat. EP300-mediated acetylation of Lys-50 promotes dissociation of Tat from the TAR RNA through the competitive binding to PCAF's bromodomain. In addition, the non-acetylated Tat's N-terminus can also interact with PCAF. PCAF-mediated acetylation of Lys-28 enhances Tat's binding to CCNT1. Lys-50 is deacetylated by SIRT1. Polyubiquitination by host MDM2 does not target Tat to degradation, but activates its transactivation function and fosters interaction with CCNT1 and TAR RNA. In terms of processing, phosphorylated by EIF2AK2 on serine and threonine residues adjacent to the basic region important for TAR RNA binding and function. Phosphorylation of Tat by EIF2AK2 is dependent on the prior activation of EIF2AK2 by dsRNA.

The protein resides in the host nucleus. It is found in the host nucleolus. The protein localises to the host cytoplasm. It localises to the secreted. Transcriptional activator that increases RNA Pol II processivity, thereby increasing the level of full-length viral transcripts. Recognizes a hairpin structure at the 5'-LTR of the nascent viral mRNAs referred to as the transactivation responsive RNA element (TAR) and recruits the cyclin T1-CDK9 complex (P-TEFb complex) that will in turn hyperphosphorylate the RNA polymerase II to allow efficient elongation. The CDK9 component of P-TEFb and other Tat-activated kinases hyperphosphorylate the C-terminus of RNA Pol II that becomes stabilized and much more processive. Other factors such as HTATSF1/Tat-SF1, SUPT5H/SPT5, and HTATIP2 are also important for Tat's function. Besides its effect on RNA Pol II processivity, Tat induces chromatin remodeling of proviral genes by recruiting the histone acetyltransferases (HATs) CREBBP, EP300 and PCAF to the chromatin. This also contributes to the increase in proviral transcription rate, especially when the provirus integrates in transcriptionally silent region of the host genome. To ensure maximal activation of the LTR, Tat mediates nuclear translocation of NF-kappa-B by interacting with host RELA. Through its interaction with host TBP, Tat may also modulate transcription initiation. Tat can reactivate a latently infected cell by penetrating in it and transactivating its LTR promoter. In the cytoplasm, Tat is thought to act as a translational activator of HIV-1 mRNAs. Its function is as follows. Extracellular circulating Tat can be endocytosed by surrounding uninfected cells via the binding to several surface receptors such as CD26, CXCR4, heparan sulfate proteoglycans (HSPG) or LDLR. Neurons are rarely infected, but they internalize Tat via their LDLR. Through its interaction with nuclear HATs, Tat is potentially able to control the acetylation-dependent cellular gene expression. Modulates the expression of many cellular genes involved in cell survival, proliferation or in coding for cytokines or cytokine receptors. Tat plays a role in T-cell and neurons apoptosis. Tat induced neurotoxicity and apoptosis probably contribute to neuroAIDS. Circulating Tat also acts as a chemokine-like and/or growth factor-like molecule that binds to specific receptors on the surface of the cells, affecting many cellular pathways. In the vascular system, Tat binds to ITGAV/ITGB3 and ITGA5/ITGB1 integrins dimers at the surface of endothelial cells and competes with bFGF for heparin-binding sites, leading to an excess of soluble bFGF. The sequence is that of Protein Tat from Homo sapiens (Human).